Here is a 457-residue protein sequence, read N- to C-terminus: Multidrug resistance protein MdtK (457 aa).

Residues 1–10 are Cytoplasmic-facing; that stretch reads MQKYISEARL. Residues 11 to 31 traverse the membrane as a helical segment; it reads LLALAIPVILAQIAQTAMGFV. Residues 32-52 are Periplasmic-facing; it reads DTVMAGGYSATDMAAVAIGTS. A helical membrane pass occupies residues 53–73; the sequence is IWLPAILFGHGLLLALTPVIA. Residues 74–92 lie on the Cytoplasmic side of the membrane; that stretch reads QLNGSGRRERIAHQVRQGF. The helical transmembrane segment at 93–113 threads the bilayer; it reads WLAGFVSVLIMLVLWNAGYII. Topologically, residues 114–126 are periplasmic; sequence RSMENIDPALADK. The chain crosses the membrane as a helical span at residues 127 to 147; that stretch reads AVGYLRALLWGAPGYLFFQVA. Residues 148 to 159 are Cytoplasmic-facing; sequence RNQCEGLAKTKP. Residues 160–180 form a helical membrane-spanning segment; that stretch reads GMVMGFIGLLVNIPVNYIFIY. Topologically, residues 181 to 191 are periplasmic; that stretch reads GHFGMPELSGV. A helical membrane pass occupies residues 192 to 212; it reads GCGVATAAVYWAMFLAMVSYI. Residues 213–242 lie on the Cytoplasmic side of the membrane; the sequence is KRARSMRDIRNEKGTAKPDPAVMKRLIQLG. The helical transmembrane segment at 243 to 263 threads the bilayer; sequence LPIALALFFEVTLFAVVALLV. Residues 264–275 lie on the Periplasmic side of the membrane; that stretch reads SPLGIVDVAGHQ. Residues 276–296 traverse the membrane as a helical segment; the sequence is IALNFSSLMFVLPMSLAAAVT. The Cytoplasmic segment spans residues 297–313; that stretch reads IRVGYRLGQGSTLDAQT. Residues 314–334 form a helical membrane-spanning segment; that stretch reads AARTGLMVGVCMATLTAIFTV. At 335-349 the chain is on the periplasmic side; that stretch reads SLREQIALLYNDNPE. The chain crosses the membrane as a helical span at residues 350–370; the sequence is VVTLAAHLMLLAAVYQISDSI. Over 371–386 the chain is Cytoplasmic; that stretch reads QVIGSGILRGYKDTRS. The helical transmembrane segment at 387–407 threads the bilayer; that stretch reads IFYITFTAYWVLGLPSGYILA. Residues 408-417 are Periplasmic-facing; the sequence is LTDLVVEPMG. A helical transmembrane segment spans residues 418-438; it reads PAGFWIGFIIGLTSAAIMMML. Over 439 to 457 the chain is Cytoplasmic; sequence RMRFLQRLPSAIILQRASR.

This sequence belongs to the multi antimicrobial extrusion (MATE) (TC 2.A.66.1) family. MdtK subfamily.

It is found in the cell inner membrane. In terms of biological role, multidrug efflux pump that functions probably as a Na(+)/drug antiporter. This Shigella dysenteriae serotype 1 (strain Sd197) protein is Multidrug resistance protein MdtK.